The sequence spans 152 residues: D-erythrulose-4-phosphate isomerase 2 (152 aa).

The active-site Proton acceptor is cysteine 70.

It belongs to the LacAB/RpiB family.

The enzyme catalyses D-erythrulose 4-phosphate = D-erythrose 4-phosphate. It participates in carbohydrate metabolism; erythritol degradation. The protein operates within carbohydrate metabolism; D-threitol degradation. It functions in the pathway carbohydrate metabolism; L-threitol degradation. Its function is as follows. Catalyzes the isomerization of D-erythrulose-4P to D-erythrose-4P. Involved in the degradation pathways of L-threitol, D-threitol and erythritol, that allow M.smegmatis to grow on these compounds as the sole carbon source. In Mycolicibacterium smegmatis (strain ATCC 700084 / mc(2)155) (Mycobacterium smegmatis), this protein is D-erythrulose-4-phosphate isomerase 2.